Consider the following 349-residue polypeptide: Ferredoxin--NADP reductase 1 (349 aa).

7 residues coordinate FAD: Glu36, Lys44, Tyr48, Ile88, Leu123, Asp290, and Ser331.

Belongs to the ferredoxin--NADP reductase type 2 family. In terms of assembly, homodimer. The cofactor is FAD.

It catalyses the reaction 2 reduced [2Fe-2S]-[ferredoxin] + NADP(+) + H(+) = 2 oxidized [2Fe-2S]-[ferredoxin] + NADPH. The polypeptide is Ferredoxin--NADP reductase 1 (Bacillus thuringiensis (strain Al Hakam)).